The chain runs to 349 residues: tRNA pseudouridine synthase D (349 aa).

Phe-26 serves as a coordination point for substrate. Asp-79 serves as the catalytic Nucleophile. Asn-128 is a binding site for substrate. The TRUD domain occupies Gly-154–Leu-302. Phe-328 is a binding site for substrate.

It belongs to the pseudouridine synthase TruD family.

It catalyses the reaction uridine(13) in tRNA = pseudouridine(13) in tRNA. Responsible for synthesis of pseudouridine from uracil-13 in transfer RNAs. The sequence is that of tRNA pseudouridine synthase D from Yersinia pseudotuberculosis serotype IB (strain PB1/+).